Here is a 336-residue protein sequence, read N- to C-terminus: Holliday junction branch migration complex subunit RuvB (336 aa).

The large ATPase domain (RuvB-L) stretch occupies residues 4 to 184 (ADRLISAGAT…FGIVQRLEFY (181 aa)). ATP contacts are provided by residues Ile23, Arg24, Gly65, Lys68, Thr69, Thr70, 131 to 133 (EDY), Arg174, Tyr184, and Arg221. Thr69 contributes to the Mg(2+) binding site. The small ATPAse domain (RuvB-S) stretch occupies residues 185 to 255 (QVPDLQHIVG…IAAQALDMLN (71 aa)). A head domain (RuvB-H) region spans residues 258–336 (AEGFDYMDRK…HFGITPPEMP (79 aa)). 3 residues coordinate DNA: Arg294, Arg313, and Arg318.

This sequence belongs to the RuvB family. Homohexamer. Forms an RuvA(8)-RuvB(12)-Holliday junction (HJ) complex. HJ DNA is sandwiched between 2 RuvA tetramers; dsDNA enters through RuvA and exits via RuvB. An RuvB hexamer assembles on each DNA strand where it exits the tetramer. Each RuvB hexamer is contacted by two RuvA subunits (via domain III) on 2 adjacent RuvB subunits; this complex drives branch migration. In the full resolvosome a probable DNA-RuvA(4)-RuvB(12)-RuvC(2) complex forms which resolves the HJ.

It localises to the cytoplasm. It carries out the reaction ATP + H2O = ADP + phosphate + H(+). In terms of biological role, the RuvA-RuvB-RuvC complex processes Holliday junction (HJ) DNA during genetic recombination and DNA repair, while the RuvA-RuvB complex plays an important role in the rescue of blocked DNA replication forks via replication fork reversal (RFR). RuvA specifically binds to HJ cruciform DNA, conferring on it an open structure. The RuvB hexamer acts as an ATP-dependent pump, pulling dsDNA into and through the RuvAB complex. RuvB forms 2 homohexamers on either side of HJ DNA bound by 1 or 2 RuvA tetramers; 4 subunits per hexamer contact DNA at a time. Coordinated motions by a converter formed by DNA-disengaged RuvB subunits stimulates ATP hydrolysis and nucleotide exchange. Immobilization of the converter enables RuvB to convert the ATP-contained energy into a lever motion, pulling 2 nucleotides of DNA out of the RuvA tetramer per ATP hydrolyzed, thus driving DNA branch migration. The RuvB motors rotate together with the DNA substrate, which together with the progressing nucleotide cycle form the mechanistic basis for DNA recombination by continuous HJ branch migration. Branch migration allows RuvC to scan DNA until it finds its consensus sequence, where it cleaves and resolves cruciform DNA. This is Holliday junction branch migration complex subunit RuvB from Salmonella arizonae (strain ATCC BAA-731 / CDC346-86 / RSK2980).